The following is a 147-amino-acid chain: Large ribosomal subunit protein bL9 (147 aa).

Belongs to the bacterial ribosomal protein bL9 family.

Its function is as follows. Binds to the 23S rRNA. The sequence is that of Large ribosomal subunit protein bL9 from Campylobacter hominis (strain ATCC BAA-381 / DSM 21671 / CCUG 45161 / LMG 19568 / NCTC 13146 / CH001A).